A 232-amino-acid chain; its full sequence is 7-cyano-7-deazaguanine synthase (232 aa).

Residue 8-18 (FSGGQDSTTCL) coordinates ATP. C189, C198, C201, and C204 together coordinate Zn(2+).

Belongs to the QueC family. Requires Zn(2+) as cofactor.

The catalysed reaction is 7-carboxy-7-deazaguanine + NH4(+) + ATP = 7-cyano-7-deazaguanine + ADP + phosphate + H2O + H(+). It functions in the pathway purine metabolism; 7-cyano-7-deazaguanine biosynthesis. In terms of biological role, catalyzes the ATP-dependent conversion of 7-carboxy-7-deazaguanine (CDG) to 7-cyano-7-deazaguanine (preQ(0)). This chain is 7-cyano-7-deazaguanine synthase, found in Photorhabdus laumondii subsp. laumondii (strain DSM 15139 / CIP 105565 / TT01) (Photorhabdus luminescens subsp. laumondii).